Here is a 226-residue protein sequence, read N- to C-terminus: UPF0758 protein PputW619_0186 (226 aa).

The 123-residue stretch at 102 to 224 (ALESPSAVRR…PLSMVEQGWI (123 aa)) folds into the MPN domain. H173, H175, and D186 together coordinate Zn(2+). The JAMM motif signature appears at 173–186 (HNHPSGNSEPSQDD).

It belongs to the UPF0758 family.

The protein is UPF0758 protein PputW619_0186 of Pseudomonas putida (strain W619).